The sequence spans 520 residues: NAD(P)H-quinone oxidoreductase subunit 2 (520 aa).

Transmembrane regions (helical) follow at residues 15-35, 42-62, 79-99, 106-126, 132-152, 167-187, 210-230, 244-264, 280-300, 306-326, 334-354, 378-398, 400-420, and 466-486; these read ILPEGIVIVTLMGVLIVDLIL, WIGYLAIAGLLAAIVALYFQW, LSIIFRGIIALSAVVTILMSI, GTALAEFIAILLTATLGGMFV, LVMIFISLETLSISSYLLTGY, LLIGASSTAVFLYGVSLLYGL, LGAVIALVFVIAGIGFKISAA, PTPVIAFLSVGSKAAGFALAI, FVFTALAVLSMILGNVVALAQ, MLAYSSIAQAGFVMIGLIAGT, IFYLLVYLFMNLCGFTCIILF, LGLSISLLSLGGIPPLAGFFG, IYLFWAGWQAGLYWLVLLGLV, and VGLVLTLIATSVAGILSNPLF.

Belongs to the complex I subunit 2 family. In terms of assembly, NDH-1 can be composed of about 15 different subunits; different subcomplexes with different compositions have been identified which probably have different functions.

Its subcellular location is the cellular thylakoid membrane. It catalyses the reaction a plastoquinone + NADH + (n+1) H(+)(in) = a plastoquinol + NAD(+) + n H(+)(out). It carries out the reaction a plastoquinone + NADPH + (n+1) H(+)(in) = a plastoquinol + NADP(+) + n H(+)(out). Its function is as follows. NDH-1 shuttles electrons from an unknown electron donor, via FMN and iron-sulfur (Fe-S) centers, to quinones in the respiratory and/or the photosynthetic chain. The immediate electron acceptor for the enzyme in this species is believed to be plastoquinone. Couples the redox reaction to proton translocation, and thus conserves the redox energy in a proton gradient. Cyanobacterial NDH-1 also plays a role in inorganic carbon-concentration. The chain is NAD(P)H-quinone oxidoreductase subunit 2 from Trichormus variabilis (strain ATCC 29413 / PCC 7937) (Anabaena variabilis).